Reading from the N-terminus, the 73-residue chain is uncharacterized protein (73 aa).

Residues 1–22 form the signal peptide; sequence MKILGVTGFILICLLAISVLMD. A helical transmembrane segment spans residues 44-66; that stretch reads TFAEWVVLLFFVLVLVREMYVIY.

It is found in the membrane. This is an uncharacterized protein from Bacillus subtilis (strain 168).